Reading from the N-terminus, the 134-residue chain is Putative pre-16S rRNA nuclease (134 aa).

The protein belongs to the YqgF nuclease family.

It localises to the cytoplasm. In terms of biological role, could be a nuclease involved in processing of the 5'-end of pre-16S rRNA. The sequence is that of Putative pre-16S rRNA nuclease from Hydrogenovibrio crunogenus (strain DSM 25203 / XCL-2) (Thiomicrospira crunogena).